Here is a 192-residue protein sequence, read N- to C-terminus: Ion-translocating oxidoreductase complex subunit B (192 aa).

Residues 1-26 (MNTIWIAVGALTLLGLVFGAILGYAS) are hydrophobic. Residues 32–91 (EDDPVVEKIDAILPQSQCGQCGYPGCRPYAEAVGLQGEKINRCAPGGEAVMLKMAELLNV) form the 4Fe-4S domain. [4Fe-4S] cluster contacts are provided by Cys-49, Cys-52, Cys-57, Cys-74, Cys-117, Cys-120, Cys-123, Cys-127, Cys-147, Cys-150, Cys-153, and Cys-157. 2 consecutive 4Fe-4S ferredoxin-type domains span residues 108-137 (MLAVIDENNCIGCTKCIQACPVDAIVGATR) and 138-167 (AMHTVMSDLCTGCNLCVDPCPTHCIELRPV).

Belongs to the 4Fe4S bacterial-type ferredoxin family. RnfB subfamily. The complex is composed of six subunits: RsxA, RsxB, RsxC, RsxD, RsxE and RsxG. Requires [4Fe-4S] cluster as cofactor.

It is found in the cell inner membrane. Functionally, part of a membrane-bound complex that couples electron transfer with translocation of ions across the membrane. Required to maintain the reduced state of SoxR. The protein is Ion-translocating oxidoreductase complex subunit B of Salmonella agona (strain SL483).